The sequence spans 205 residues: Adenylyl-sulfate kinase (205 aa).

31 to 38 is a binding site for ATP; that stretch reads GLSGAGKS. Ser105 serves as the catalytic Phosphoserine intermediate.

The protein belongs to the APS kinase family.

The catalysed reaction is adenosine 5'-phosphosulfate + ATP = 3'-phosphoadenylyl sulfate + ADP + H(+). Its pathway is sulfur metabolism; hydrogen sulfide biosynthesis; sulfite from sulfate: step 2/3. Catalyzes the synthesis of activated sulfate. The protein is Adenylyl-sulfate kinase of Shewanella sp. (strain ANA-3).